A 364-amino-acid chain; its full sequence is tRNA-specific 2-thiouridylase MnmA (364 aa).

ATP-binding positions include 13–20 (GMSGGVDS) and M39. Residues 99–101 (NPD) form an interaction with target base in tRNA region. C104 (nucleophile) is an active-site residue. A disulfide bond links C104 and C200. G128 is an ATP binding site. The segment at 150 to 152 (KDQ) is interaction with tRNA. C200 serves as the catalytic Cysteine persulfide intermediate. Residues 310-311 (RY) are interaction with tRNA.

It belongs to the MnmA/TRMU family.

It localises to the cytoplasm. The catalysed reaction is S-sulfanyl-L-cysteinyl-[protein] + uridine(34) in tRNA + AH2 + ATP = 2-thiouridine(34) in tRNA + L-cysteinyl-[protein] + A + AMP + diphosphate + H(+). Its function is as follows. Catalyzes the 2-thiolation of uridine at the wobble position (U34) of tRNA, leading to the formation of s(2)U34. The protein is tRNA-specific 2-thiouridylase MnmA of Alkaliphilus oremlandii (strain OhILAs) (Clostridium oremlandii (strain OhILAs)).